The sequence spans 658 residues: Pentatricopeptide repeat-containing protein At1g69290 (658 aa).

2 disordered regions span residues 1–23 (MFRKTLNSISRRHFSSSSPESPS) and 39–61 (TLSPSLSPPQNPKTLTPDQKSSF). Over residues 50-61 (PKTLTPDQKSSF) the composition is skewed to polar residues. PPR repeat units lie at residues 214–249 (DLVASNAALEACCRQMESLADAENVIESMAVLGVKP), 250–284 (DELSFGFLAYLYARKGLREKISELENLMDGFGFAS), 285–320 (RRILYSNMISGYVKSGDLDSVSDVILHSLKEGGEES), 323–353 (SVETYCELVKGFIESKSVKSLAKVILEAQKL), 361–395 (DSSVGFGIINACVNLGFSDKAHSILEEMIAQGGGS), 397–431 (GIGVYVPILKAYCKEYRTAEATQLVTEISSSGLQL), 432–466 (DVEISNALIEASMTNQDFISAFTLFRDMRENRVVD), 467–497 (LKGSYLTIMTGLLENQRPELMAAFLDEVVED), 503–537 (NSHDWNSIIHAFCKSGRLEDARRTFRRMVFLRYEP), 538–568 (NNQTYLSLINGYVSGEKYFNVLLLWNEIKGK), and 581–615 (DHALVDAFLYALVKGGFFDAAMQVVEKSQEMKIFV).

This sequence belongs to the PPR family. P subfamily.

This is Pentatricopeptide repeat-containing protein At1g69290 from Arabidopsis thaliana (Mouse-ear cress).